The sequence spans 178 residues: Nascent polypeptide-associated complex subunit alpha (178 aa).

The region spanning 16–80 is the NAC-A/B domain; the sequence is PKNEKKAREL…AKVDDMNQRI (65 aa). Over residues 82–100 the composition is skewed to low complexity; the sequence is EAQAQQAQQEALQKAAADA. Residues 82–145 are disordered; the sequence is EAQAQQAQQE…DETGLDPKDI (64 aa). Basic and acidic residues predominate over residues 101-126; sequence GKTEDKSPEAITADLEKASLGDKKAE. Positions 127–139 are enriched in acidic residues; that stretch reads DEEEDEGEIDETG. The 39-residue stretch at 140–178 folds into the UBA domain; sequence LDPKDIEIVVEQTQVSRAKAVKALRNHDGDMVNAIMDLS.

The protein belongs to the NAC-alpha family. Part of the nascent polypeptide-associated complex (NAC), consisting of EGD2 and EGD1. NAC associates with ribosomes via EGD1.

The protein localises to the cytoplasm. It is found in the nucleus. Functionally, component of the nascent polypeptide-associated complex (NAC), a dynamic component of the ribosomal exit tunnel, protecting the emerging polypeptides from interaction with other cytoplasmic proteins to ensure appropriate nascent protein targeting. The NAC complex also promotes mitochondrial protein import by enhancing productive ribosome interactions with the outer mitochondrial membrane and blocks the inappropriate interaction of ribosomes translating non-secretory nascent polypeptides with translocation sites in the membrane of the endoplasmic reticulum. EGD2 may also be involved in transcription regulation. The sequence is that of Nascent polypeptide-associated complex subunit alpha (EGD2) from Candida albicans (strain SC5314 / ATCC MYA-2876) (Yeast).